A 469-amino-acid chain; its full sequence is Glutamate--tRNA ligase (469 aa).

The 'HIGH' region signature appears at 11-21; that stretch reads PSPTGFIHLGN. Residues 118 to 131 are compositionally biased toward basic and acidic residues; it reads GEKPRYDGTWRPEP. A disordered region spans residues 118–139; sequence GEKPRYDGTWRPEPGKVLPEPP. The short motif at 243–247 is the 'KMSKS' region element; sequence KMSKR. Lysine 246 provides a ligand contact to ATP.

This sequence belongs to the class-I aminoacyl-tRNA synthetase family. Glutamate--tRNA ligase type 1 subfamily. In terms of assembly, monomer.

The protein localises to the cytoplasm. It carries out the reaction tRNA(Glu) + L-glutamate + ATP = L-glutamyl-tRNA(Glu) + AMP + diphosphate. Its function is as follows. Catalyzes the attachment of glutamate to tRNA(Glu) in a two-step reaction: glutamate is first activated by ATP to form Glu-AMP and then transferred to the acceptor end of tRNA(Glu). This is Glutamate--tRNA ligase from Burkholderia pseudomallei (strain 1106a).